The sequence spans 1054 residues: Translation initiation factor IF-2 (1054 aa).

Disordered stretches follow at residues 48–390 (RSKL…LDLD) and 409–458 (LARP…GTEP). Pro residues predominate over residues 65–76 (KPPSESLPPEPP). Polar residues predominate over residues 160-169 (SEATQKPETV). Over residues 179 to 193 (SESAAAKASGSEPSP) the composition is skewed to low complexity. Composition is skewed to pro residues over residues 221–235 (PQKAPEPSRPSPSEA) and 304–316 (PTRPVAKPAPPEP). A compositionally biased stretch (basic residues) spans 365–378 (RAARVQAKRKRSRR). Over residues 421-437 (PPAATAAPPARPRPAAR) the composition is skewed to low complexity. The tr-type G domain maps to 545-718 (SRPPVVTIMG…LLVADVAELQ (174 aa)). A G1 region spans residues 554-561 (GHVDHGKT). 554–561 (GHVDHGKT) lines the GTP pocket. Residues 579–583 (GITQR) form a G2 region. Positions 604-607 (DTPG) are G3. GTP contacts are provided by residues 604–608 (DTPGH) and 658–661 (NKID). Positions 658 to 661 (NKID) are G4. Residues 694 to 696 (SAL) are G5.

Belongs to the TRAFAC class translation factor GTPase superfamily. Classic translation factor GTPase family. IF-2 subfamily.

It is found in the cytoplasm. One of the essential components for the initiation of protein synthesis. Protects formylmethionyl-tRNA from spontaneous hydrolysis and promotes its binding to the 30S ribosomal subunits. Also involved in the hydrolysis of GTP during the formation of the 70S ribosomal complex. The protein is Translation initiation factor IF-2 of Synechococcus sp. (strain JA-2-3B'a(2-13)) (Cyanobacteria bacterium Yellowstone B-Prime).